Consider the following 358-residue polypeptide: 3-isopropylmalate dehydrogenase (358 aa).

Residue 76 to 89 (GPRWDNLTGAERPE) coordinates NAD(+). Substrate-binding residues include Arg-96, Arg-106, Arg-135, and Asp-225. 3 residues coordinate Mg(2+): Asp-225, Asp-249, and Asp-253. 283-295 (GSAPDIAGQNKAN) contacts NAD(+).

Belongs to the isocitrate and isopropylmalate dehydrogenases family. LeuB type 1 subfamily. Homodimer. Mg(2+) is required as a cofactor. The cofactor is Mn(2+).

It localises to the cytoplasm. The catalysed reaction is (2R,3S)-3-isopropylmalate + NAD(+) = 4-methyl-2-oxopentanoate + CO2 + NADH. It participates in amino-acid biosynthesis; L-leucine biosynthesis; L-leucine from 3-methyl-2-oxobutanoate: step 3/4. Its function is as follows. Catalyzes the oxidation of 3-carboxy-2-hydroxy-4-methylpentanoate (3-isopropylmalate) to 3-carboxy-4-methyl-2-oxopentanoate. The product decarboxylates to 4-methyl-2 oxopentanoate. The polypeptide is 3-isopropylmalate dehydrogenase (Oleidesulfovibrio alaskensis (strain ATCC BAA-1058 / DSM 17464 / G20) (Desulfovibrio alaskensis)).